A 55-amino-acid chain; its full sequence is ATP synthase protein 8 (55 aa).

A helical membrane pass occupies residues 7 to 28; sequence ISWFFNFLLAWFFLFIVVTILL.

It belongs to the ATPase protein 8 family. In terms of assembly, F-type ATPases have 2 components, CF(1) - the catalytic core - and CF(0) - the membrane proton channel.

Its subcellular location is the mitochondrion membrane. Mitochondrial membrane ATP synthase (F(1)F(0) ATP synthase or Complex V) produces ATP from ADP in the presence of a proton gradient across the membrane which is generated by electron transport complexes of the respiratory chain. F-type ATPases consist of two structural domains, F(1) - containing the extramembraneous catalytic core and F(0) - containing the membrane proton channel, linked together by a central stalk and a peripheral stalk. During catalysis, ATP synthesis in the catalytic domain of F(1) is coupled via a rotary mechanism of the central stalk subunits to proton translocation. Part of the complex F(0) domain. Minor subunit located with subunit a in the membrane. The protein is ATP synthase protein 8 (MT-ATP8) of Pisaster ochraceus (Ochre sea star).